Consider the following 446-residue polypeptide: Minor teichoic acid biosynthesis protein GgaA (446 aa).

Belongs to the glycosyltransferase 2 family.

Its pathway is cell wall biogenesis; poly(glucopyranosyl N-acetylgalactosamine 1-phosphate) teichoic acid biosynthesis. Functionally, involved in the biosynthesis of galactosamine-containing minor teichoic acid, a non-essential cell wall polymer in B.subtilis 168. This is Minor teichoic acid biosynthesis protein GgaA (ggaA) from Bacillus subtilis (strain 168).